The following is a 130-amino-acid chain: Large ribosomal subunit protein bL21 (130 aa).

The tract at residues 110–130 (KTAAQPAADEAVAANEVDSEA) is disordered. Positions 112 to 130 (AAQPAADEAVAANEVDSEA) are enriched in low complexity.

This sequence belongs to the bacterial ribosomal protein bL21 family. Part of the 50S ribosomal subunit. Contacts protein L20.

Its function is as follows. This protein binds to 23S rRNA in the presence of protein L20. The sequence is that of Large ribosomal subunit protein bL21 from Cyanothece sp. (strain PCC 7425 / ATCC 29141).